The primary structure comprises 856 residues: Histone-lysine N-methyltransferase EZA1 (856 aa).

The span at 1–11 shows a compositional bias: polar residues; that stretch reads MVTDDSNSSGR. Disordered regions lie at residues 1–34, 66–87, and 366–473; these read MVTD…GLEN, VSPF…NSNM, and NVDS…HHGS. Residues 17–28 are compositionally biased toward acidic residues; it reads DDDDDGEEEEDR. The stretch at 22-49 forms a coiled coil; the sequence is GEEEEDRLEGLENRLSELKRKIQGERVR. Polar residues predominate over residues 68–87; it reads PFSSAASSRATAEDNGNSNM. Residues 374 to 392 are compositionally biased toward basic and acidic residues; it reads EQEHGIRGKREVPILKDSN. Polar residues predominate over residues 393–419; the sequence is DLPNLSNKKQKTAASDTKMSFVNSVPS. Residues 438–451 are compositionally biased toward basic and acidic residues; sequence KVNRDSEADAKEVG. Positions 489–539 constitute an SANT domain; sequence PSTEWNPIEKDLYLKGVEIFGRNSCLIARNLLSGLKTCLDVSNYMRENEVS. The CXC domain occupies 594–693; sequence WKRIAGGKNQ…SLGEAPRRGE (100 aa). The 116-residue stretch at 707–822 folds into the SET domain; that stretch reads QRILLGKSDV…ASEELFYDYR (116 aa). S-adenosyl-L-methionine is bound at residue tyrosine 821. The tract at residues 827–856 is disordered; that stretch reads QAPVWARKPEGSKKDDSAITHRRARKHQSH. Residues 833-845 are compositionally biased toward basic and acidic residues; sequence RKPEGSKKDDSAI. Residues 838–845 carry the Nuclear localization signal motif; that stretch reads SKKDDSAI. A compositionally biased stretch (basic residues) spans 846–856; the sequence is THRRARKHQSH.

Belongs to the class V-like SAM-binding methyltransferase superfamily. Histone-lysine methyltransferase family. EZ subfamily. As to quaternary structure, component of the plant homeodomain / polycomb repressive complex 2 (PHD-PRC2) large complex during prolonged cold, composed of core PRC2 components (VRN2, EZA1, FIE and MSI1), and three related PHD finger proteins (VIL1, VIL2 and VIN3) that mediates histone H3 trimethylation on 'Lys-27' H3K27me3. Interacts with TAF13. Interacts with EOL1. Interacts (via SANT domain) with HXK1 in the nucleus.

Its subcellular location is the nucleus. The catalysed reaction is L-lysyl(27)-[histone H3] + 3 S-adenosyl-L-methionine = N(6),N(6),N(6)-trimethyl-L-lysyl(27)-[histone H3] + 3 S-adenosyl-L-homocysteine + 3 H(+). Functionally, polycomb group (PcG) protein. Catalytic subunit of some PcG multiprotein complex, which methylates 'Lys-27' of histone H3, leading to transcriptional repression of the affected target genes, mainly abscisic acid (ABA) responsive elements. PcG proteins act by forming multiprotein complexes, which are required to maintain the transcriptionally repressive state of homeotic genes throughout development. PcG proteins are not required to initiate repression, but to maintain it during later stages of development. Forms a nuclear complex with CLF and HXK1 to target common glucose-responsive genes and regulate glucose signaling by glucose-mediated gene repression. Affects the recruitment of HXK1 to the target chromatin. This Arabidopsis thaliana (Mouse-ear cress) protein is Histone-lysine N-methyltransferase EZA1.